The sequence spans 180 residues: GTP cyclohydrolase 1 (180 aa).

Residues cysteine 71, histidine 74, and cysteine 142 each contribute to the Zn(2+) site.

The protein belongs to the GTP cyclohydrolase I family. As to quaternary structure, toroid-shaped homodecamer, composed of two pentamers of five dimers.

The enzyme catalyses GTP + H2O = 7,8-dihydroneopterin 3'-triphosphate + formate + H(+). It functions in the pathway cofactor biosynthesis; 7,8-dihydroneopterin triphosphate biosynthesis; 7,8-dihydroneopterin triphosphate from GTP: step 1/1. The protein is GTP cyclohydrolase 1 (folE) of Helicobacter pylori (strain J99 / ATCC 700824) (Campylobacter pylori J99).